We begin with the raw amino-acid sequence, 670 residues long: tRNA 5-methylaminomethyl-2-thiouridine biosynthesis bifunctional protein MnmC (670 aa).

Residues 1-245 (MKPIAIQPAS…KREMLTGALS (245 aa)) are tRNA (mnm(5)s(2)U34)-methyltransferase. The FAD-dependent cmnm(5)s(2)U34 oxidoreductase stretch occupies residues 271-670 (VGGGIASALL…RKLLKGRAAS (400 aa)).

The protein in the N-terminal section; belongs to the methyltransferase superfamily. tRNA (mnm(5)s(2)U34)-methyltransferase family. This sequence in the C-terminal section; belongs to the DAO family. FAD is required as a cofactor.

The protein resides in the cytoplasm. It catalyses the reaction 5-aminomethyl-2-thiouridine(34) in tRNA + S-adenosyl-L-methionine = 5-methylaminomethyl-2-thiouridine(34) in tRNA + S-adenosyl-L-homocysteine + H(+). Catalyzes the last two steps in the biosynthesis of 5-methylaminomethyl-2-thiouridine (mnm(5)s(2)U) at the wobble position (U34) in tRNA. Catalyzes the FAD-dependent demodification of cmnm(5)s(2)U34 to nm(5)s(2)U34, followed by the transfer of a methyl group from S-adenosyl-L-methionine to nm(5)s(2)U34, to form mnm(5)s(2)U34. The chain is tRNA 5-methylaminomethyl-2-thiouridine biosynthesis bifunctional protein MnmC from Cronobacter sakazakii (strain ATCC BAA-894) (Enterobacter sakazakii).